The following is a 227-amino-acid chain: Orotidine 5'-phosphate decarboxylase (227 aa).

Substrate-binding positions include Asp-8, Lys-30, 57–66, Thr-116, Arg-177, Gln-186, Gly-206, and Arg-207; that span reads DLKFHDIPNT. Lys-59 acts as the Proton donor in catalysis.

Belongs to the OMP decarboxylase family. Type 1 subfamily. In terms of assembly, homodimer.

It carries out the reaction orotidine 5'-phosphate + H(+) = UMP + CO2. It functions in the pathway pyrimidine metabolism; UMP biosynthesis via de novo pathway; UMP from orotate: step 2/2. Catalyzes the decarboxylation of orotidine 5'-monophosphate (OMP) to uridine 5'-monophosphate (UMP). This Acinetobacter baylyi (strain ATCC 33305 / BD413 / ADP1) protein is Orotidine 5'-phosphate decarboxylase.